The sequence spans 219 residues: Large ribosomal subunit protein bL25 (219 aa).

Residues 195-219 form a disordered region; that stretch reads EETTTTETSNEPEVIKKGKKEEEEK. The span at 197–206 shows a compositional bias: low complexity; that stretch reads TTTTETSNEP. Residues 207–219 show a composition bias toward basic and acidic residues; sequence EVIKKGKKEEEEK.

It belongs to the bacterial ribosomal protein bL25 family. CTC subfamily. As to quaternary structure, part of the 50S ribosomal subunit; part of the 5S rRNA/L5/L18/L25 subcomplex. Contacts the 5S rRNA. Binds to the 5S rRNA independently of L5 and L18.

Its function is as follows. This is one of the proteins that binds to the 5S RNA in the ribosome where it forms part of the central protuberance. This is Large ribosomal subunit protein bL25 from Fervidobacterium nodosum (strain ATCC 35602 / DSM 5306 / Rt17-B1).